A 291-amino-acid chain; its full sequence is 33 kDa chaperonin (291 aa).

Cystine bridges form between cysteine 235–cysteine 237 and cysteine 268–cysteine 271.

Belongs to the HSP33 family. Under oxidizing conditions two disulfide bonds are formed involving the reactive cysteines. Under reducing conditions zinc is bound to the reactive cysteines and the protein is inactive.

It localises to the cytoplasm. In terms of biological role, redox regulated molecular chaperone. Protects both thermally unfolding and oxidatively damaged proteins from irreversible aggregation. Plays an important role in the bacterial defense system toward oxidative stress. The chain is 33 kDa chaperonin from Bacillus pumilus (strain SAFR-032).